The sequence spans 185 residues: UPF0397 protein lhv_0999 (185 aa).

Transmembrane regions (helical) follow at residues 11–31 (VVAMGIGSAIYVILTRFTSIP), 45–65 (FLALFAAIYGAKVGFAVGFIG), 72–92 (IMYGQTWWSWVLATGVLGLII), 111–131 (ILLFNIVQIFANIIAWIVVAP), and 145–165 (VFVQGISATLSNGITILVVGT).

Belongs to the UPF0397 family.

It localises to the cell membrane. The polypeptide is UPF0397 protein lhv_0999 (Lactobacillus helveticus (strain DPC 4571)).